A 185-amino-acid polypeptide reads, in one-letter code: Ion-translocating oxidoreductase complex subunit B (185 aa).

Residues 1-26 form a hydrophobic region; the sequence is MNHILLIILIFAALALIFGLLLGFAA. The 59-residue stretch at 32–90 folds into the 4Fe-4S domain; sequence ESDPIVDQLDALLPQTQCGQCGYPGCRPYAEAIANGDSINKCVPGGAQTIQNIADLMGV. [4Fe-4S] cluster is bound by residues cysteine 49, cysteine 52, cysteine 57, cysteine 73, cysteine 115, cysteine 118, cysteine 121, cysteine 125, cysteine 145, cysteine 148, cysteine 151, and cysteine 155. 4Fe-4S ferredoxin-type domains follow at residues 106–135 and 136–165; these read RVAF…GAPK and LMHT…MIEL.

This sequence belongs to the 4Fe4S bacterial-type ferredoxin family. RnfB subfamily. In terms of assembly, the complex is composed of six subunits: RnfA, RnfB, RnfC, RnfD, RnfE and RnfG. [4Fe-4S] cluster is required as a cofactor.

Its subcellular location is the cell inner membrane. Its function is as follows. Part of a membrane-bound complex that couples electron transfer with translocation of ions across the membrane. This chain is Ion-translocating oxidoreductase complex subunit B, found in Tolumonas auensis (strain DSM 9187 / NBRC 110442 / TA 4).